Reading from the N-terminus, the 102-residue chain is MNGQNIRIRLKAFDHRILDASTREIVSTAKRTGANVRGPIPLPTRIEKFTVNRSPHIDKKSREQFEMRTHKRLLDIVDPTPQTVDALMKLDLSAGVDVEIKL.

It belongs to the universal ribosomal protein uS10 family. In terms of assembly, part of the 30S ribosomal subunit.

In terms of biological role, involved in the binding of tRNA to the ribosomes. This is Small ribosomal subunit protein uS10 from Brucella abortus (strain S19).